A 393-amino-acid polypeptide reads, in one-letter code: NAD(P)H-quinone oxidoreductase subunit H, chloroplastic (393 aa).

The protein belongs to the complex I 49 kDa subunit family. As to quaternary structure, NDH is composed of at least 16 different subunits, 5 of which are encoded in the nucleus.

It is found in the plastid. It localises to the chloroplast thylakoid membrane. The catalysed reaction is a plastoquinone + NADH + (n+1) H(+)(in) = a plastoquinol + NAD(+) + n H(+)(out). The enzyme catalyses a plastoquinone + NADPH + (n+1) H(+)(in) = a plastoquinol + NADP(+) + n H(+)(out). In terms of biological role, NDH shuttles electrons from NAD(P)H:plastoquinone, via FMN and iron-sulfur (Fe-S) centers, to quinones in the photosynthetic chain and possibly in a chloroplast respiratory chain. The immediate electron acceptor for the enzyme in this species is believed to be plastoquinone. Couples the redox reaction to proton translocation, and thus conserves the redox energy in a proton gradient. The polypeptide is NAD(P)H-quinone oxidoreductase subunit H, chloroplastic (Manihot esculenta (Cassava)).